The following is an 89-amino-acid chain: FMRFamide-like neuropeptides 19 (89 aa).

Positions 1–20 are cleaved as a signal peptide; that stretch reads MSFQLTLFSMLFLLIAVVVG. A propeptide spanning residues 21–67 is cleaved from the precursor; it reads QPIQSQNGDLKMQAVQDNSPLNMEAFNDDSALYDYLEQSDPSLKSME. A Phenylalanine amide modification is found at Phe76. A propeptide spanning residues 80–89 is cleaved from the precursor; sequence ASWASSVRFG.

The protein belongs to the FARP (FMRFamide related peptide) family. Each flp gene is expressed in a distinct set of neurons. Flp-19 is expressed in the URX interneurons, the serotonin and acetylcholine-expressing HSN neurons, and the AIN, AWA and BAG neurons.

Its subcellular location is the secreted. Its function is as follows. FMRFamides and FMRFamide-like peptides are neuropeptides. WANQVRF-amide inhibits the activity of dissected pharyngeal myogenic muscle system. This chain is FMRFamide-like neuropeptides 19, found in Caenorhabditis elegans.